Here is a 295-residue protein sequence, read N- to C-terminus: Protein gurken (295 aa).

Positions 1–26 (MMQIPFTRIFKVIFVLSTIVAVTDCC) are cleaved as a signal peptide. Over 27–247 (SSRILLLREH…TAQRKVRMAH (221 aa)) the chain is Extracellular. Disordered regions lie at residues 78-111 (EASA…SIAA) and 124-175 (TDTW…NDKE). Over residues 124-139 (TDTWLASESSTPITDS) the composition is skewed to polar residues. Composition is skewed to low complexity over residues 140 to 152 (ETVT…THTG) and 159 to 171 (SSSS…TPSP). One can recognise an EGF-like domain in the interval 179–224 (QMLPCSEAYNTSFCLNGGHCFQHPMVNNTVFHSCLCVNDYDGERCA). Cystine bridges form between Cys-183/Cys-198, Cys-192/Cys-212, and Cys-214/Cys-223. Residues Asn-188 and Asn-205 are each glycosylated (N-linked (GlcNAc...) asparagine). The segment at 215–245 (VNDYDGERCAYKSWNGDYIYSPPTAQRKVRM) is interaction with cni. Residues 248-268 (IVFSFPVLLMLSSLYVLFAAV) traverse the membrane as a helical segment. Residues 269–295 (FMLRNVPDYRRKQQQLHLHKQRFFVRC) are Cytoplasmic-facing.

As to quaternary structure, interacts with cni. In terms of tissue distribution, expressed in nurse cells and oocyte up to oogenesis stage 7. Specifically accumulates in dorsal anterior corner of the oocyte during stages 9/10, at later stages expression is seen as an anterior ring. In stage 10 ovaries, it is concentrated between the oocyte nucleus and the adjacent oolemma. During vitellogenesis stage it can be detected at the oocyte surface, especially on the microvilli. It is also found at the microvilli covering the apical surface of the follicular epithelium and within follicle cells.

It is found in the cell membrane. Critical for defining the anterior-posterior and dorsal-ventral axes of the egg. May signal directly to dorsal follicle cells through the receptor torpedo (top). During oogenesis this signaling pathway instructs follicle cells to follow a dorsal pathway of development rather than the default ventral pathway. The sequence is that of Protein gurken (grk) from Drosophila melanogaster (Fruit fly).